A 262-amino-acid polypeptide reads, in one-letter code: Sugar fermentation stimulation protein homolog (262 aa).

This sequence belongs to the SfsA family.

The sequence is that of Sugar fermentation stimulation protein homolog from Lawsonia intracellularis (strain PHE/MN1-00).